We begin with the raw amino-acid sequence, 217 residues long: Large ribosomal subunit protein uL3 (217 aa).

Polar residues predominate over residues 134 to 146 (GRATHGNSRSHNV). The disordered stretch occupies residues 134-154 (GRATHGNSRSHNVPGSIGMAQ). Gln154 is modified (N5-methylglutamine).

It belongs to the universal ribosomal protein uL3 family. Part of the 50S ribosomal subunit. Forms a cluster with proteins L14 and L19. Post-translationally, methylated by PrmB.

Its function is as follows. One of the primary rRNA binding proteins, it binds directly near the 3'-end of the 23S rRNA, where it nucleates assembly of the 50S subunit. This Burkholderia cenocepacia (strain HI2424) protein is Large ribosomal subunit protein uL3.